A 322-amino-acid chain; its full sequence is CRISPR-associated endonuclease Cas1 (322 aa).

Residues E149, H214, and E229 each coordinate Mn(2+).

Belongs to the CRISPR-associated endonuclease Cas1 family. As to quaternary structure, homodimer, forms a heterotetramer with a Cas2 homodimer. The cofactor is Mg(2+). It depends on Mn(2+) as a cofactor.

In terms of biological role, CRISPR (clustered regularly interspaced short palindromic repeat), is an adaptive immune system that provides protection against mobile genetic elements (viruses, transposable elements and conjugative plasmids). CRISPR clusters contain spacers, sequences complementary to antecedent mobile elements, and target invading nucleic acids. CRISPR clusters are transcribed and processed into CRISPR RNA (crRNA). Acts as a dsDNA endonuclease. Involved in the integration of spacer DNA into the CRISPR cassette. In Methanocaldococcus jannaschii (strain ATCC 43067 / DSM 2661 / JAL-1 / JCM 10045 / NBRC 100440) (Methanococcus jannaschii), this protein is CRISPR-associated endonuclease Cas1.